We begin with the raw amino-acid sequence, 375 residues long: GDP-mannose transporter GONST2 (375 aa).

Transmembrane regions (helical) follow at residues 79-99 (LVSGAAYCISSCSMIILNKIV), 112-132 (MLYQNLISCLVVAVLDISGVV), 141-161 (LIRVWMPVNVIFVGMLVSGMY), 165-185 (YINVAMVTILKNATNILTGIG), 199-219 (WAAMFMMIISAISGGITDLTF), 262-282 (MVLLNNLLSIPFGIILIILLG), 300-320 (VVATASGFLGLAISFTSMWFL), 327-347 (TYSLVGSLNKVPISLAGLVLF), and 349-369 (VPLSLPNLFSILFGLFAGVVF).

Belongs to the nucleotide-sugar transporter family. GDP-Mannose:GMP antiporter (GMA) (TC 2.A.7.13) subfamily. In terms of tissue distribution, expressed in rosette leaves, stems, flowers and siliques.

The protein localises to the golgi apparatus membrane. In terms of biological role, GDP-mannose transporter that may be involved in the import of GDP-mannose from the cytoplasm into the Golgi lumen. The chain is GDP-mannose transporter GONST2 from Arabidopsis thaliana (Mouse-ear cress).